The primary structure comprises 192 residues: uncharacterized protein (192 aa).

The region spanning 29-160 (QRQAAVLVPI…PLDIERKQQR (132 aa)) is the Nudix hydrolase domain. Residues 67–89 (GAADKTDRSIIETALREAQEEVA) carry the Nudix box motif. Mg(2+) contacts are provided by E83 and E87.

Belongs to the Nudix hydrolase family. PCD1 subfamily. Requires Mn(2+) as cofactor. The cofactor is Mg(2+).

Probably mediates the hydrolysis of some nucleoside diphosphate derivatives. This is an uncharacterized protein from Pectobacterium atrosepticum (strain SCRI 1043 / ATCC BAA-672) (Erwinia carotovora subsp. atroseptica).